The sequence spans 232 residues: Aliphatic sulfonates import ATP-binding protein SsuB 2 (232 aa).

The region spanning M1 to A216 is the ABC transporter domain. Residue G33–S40 coordinates ATP.

This sequence belongs to the ABC transporter superfamily. Aliphatic sulfonates importer (TC 3.A.1.17.2) family. In terms of assembly, the complex is composed of two ATP-binding proteins (SsuB), two transmembrane proteins (SsuC) and a solute-binding protein (SsuA).

The protein resides in the cell inner membrane. It carries out the reaction ATP + H2O + aliphatic sulfonate-[sulfonate-binding protein]Side 1 = ADP + phosphate + aliphatic sulfonateSide 2 + [sulfonate-binding protein]Side 1.. Functionally, part of the ABC transporter complex SsuABC involved in aliphatic sulfonates import. Responsible for energy coupling to the transport system. In Pseudomonas syringae pv. tomato (strain ATCC BAA-871 / DC3000), this protein is Aliphatic sulfonates import ATP-binding protein SsuB 2.